A 379-amino-acid polypeptide reads, in one-letter code: Beta sliding clamp (379 aa).

The protein belongs to the beta sliding clamp family. As to quaternary structure, forms a ring-shaped head-to-tail homodimer around DNA which binds and tethers DNA polymerases and other proteins to the DNA. The DNA replisome complex has a single clamp-loading complex (3 tau and 1 each of delta, delta', psi and chi subunits) which binds 3 Pol III cores (1 core on the leading strand and 2 on the lagging strand) each with a beta sliding clamp dimer. Additional proteins in the replisome are other copies of gamma, psi and chi, Ssb, DNA helicase and RNA primase.

The protein resides in the cytoplasm. Its function is as follows. Confers DNA tethering and processivity to DNA polymerases and other proteins. Acts as a clamp, forming a ring around DNA (a reaction catalyzed by the clamp-loading complex) which diffuses in an ATP-independent manner freely and bidirectionally along dsDNA. Initially characterized for its ability to contact the catalytic subunit of DNA polymerase III (Pol III), a complex, multichain enzyme responsible for most of the replicative synthesis in bacteria; Pol III exhibits 3'-5' exonuclease proofreading activity. The beta chain is required for initiation of replication as well as for processivity of DNA replication. The chain is Beta sliding clamp (dnaN) from Rickettsia felis (strain ATCC VR-1525 / URRWXCal2) (Rickettsia azadi).